Here is a 319-residue protein sequence, read N- to C-terminus: Polyprenal reductase (319 aa).

At 1–12 (MQLVQLLPPGVS) the chain is on the cytoplasmic side. Residues 13 to 33 (LLALVWLAVDAAFLTALLLYL) traverse the membrane as a helical segment. The Lumenal segment spans residues 34-79 (QRGCDSGRSLLCSVFQDLIRYGKTKSGLRRPSWLQWFDIPKRCFWH). The chain crosses the membrane as a helical span at residues 80-100 (FYFVSLVWNGFLLWILLHLLL). Topologically, residues 101–122 (QSVPVPEWLQAVLQFLCAGSEP) are cytoplasmic. Residues 123 to 143 (QVLGGELSVVLAFSLLWLHSL) traverse the membrane as a helical segment. Topologically, residues 144-158 (RRLLECLFVSIFSNG) are lumenal. Residues 159–179 (VIHFVQYCFGLGYYILIGFTI) traverse the membrane as a helical segment. Residues 180–195 (LGYCPLDRRTAVSLDD) are Cytoplasmic-facing. The helical transmembrane segment at 196 to 216 (LLMQGNWYHILGLTLYVWASL) threads the bilayer. The Lumenal portion of the chain corresponds to 217–266 (HQYTCHCILADLRKSASGAIINLKHAVPTGDWFEKVSCPHYFAELLIYLS). Residues 267–287 (IAVVFGLLNTIWWLVVLYVLL) traverse the membrane as a helical segment. Over 288-319 (SQALAAVLCHEFYHEKFDSYPIHRKAFIPLIF) the chain is Cytoplasmic.

It belongs to the steroid 5-alpha reductase family. Polyprenal reductase subfamily.

It localises to the endoplasmic reticulum membrane. It catalyses the reaction a di-trans,poly-cis-dolichal + NADP(+) = a di-trans,poly-cis-polyprenal + NADPH + H(+). It carries out the reaction a 3-oxo-5alpha-steroid + NADP(+) = a 3-oxo-Delta(4)-steroid + NADPH + H(+). The catalysed reaction is androst-4-ene-3,17-dione + NADPH + H(+) = 5alpha-androstan-3,17-dione + NADP(+). The enzyme catalyses 17beta-hydroxy-5alpha-androstan-3-one + NADP(+) = testosterone + NADPH + H(+). It participates in protein modification; protein glycosylation. Functionally, plays a key role in early steps of protein N-linked glycosylation by being involved in the conversion of polyprenol into dolichol. Acts as a polyprenal reductase that mediates the reduction of polyprenal into dolichal in a NADP-dependent mechanism. Dolichols are required for the synthesis of dolichol-linked monosaccharides and the oligosaccharide precursor used for N-glycosylation. Also able to convert testosterone (T) into 5-alpha-dihydrotestosterone (DHT). The sequence is that of Polyprenal reductase (srd5a3) from Xenopus laevis (African clawed frog).